The following is a 129-amino-acid chain: MLIVYYSLTGNVKRFIQKTKYTNTLTLDQAEGINEPYIIVTGTIGFGEIPDPVRQFLDRHSANLLAVAASGNRNWGQNYARAGDLISSTYHVPLLMKFELHGNDNDVKEFNIKVEEISEYHTRETVQSY.

The protein belongs to the NrdI family.

Its function is as follows. Probably involved in ribonucleotide reductase function. This is Protein NrdI from Macrococcus caseolyticus (strain JCSC5402) (Macrococcoides caseolyticum).